The following is a 123-amino-acid chain: MKIKYFFIPLFSSAILFSACSSIQSDLRNLIKETTGKDFDVSKLIKTSEGRKNLINSLKKSYESKPDETASLLLIAWKQSAEMGEIGFDDIKEGGIYTRDNDPFKLEQKVEYFNMEYKILVMF.

Residues 1-19 (MKIKYFFIPLFSSAILFSA) form the signal peptide. Cys20 carries the N-palmitoyl cysteine lipid modification. Cys20 carries the S-diacylglycerol cysteine lipid modification.

The protein belongs to the MG439/MG440 family.

It localises to the cell membrane. This is an uncharacterized protein from Mycoplasma pneumoniae (strain ATCC 29342 / M129 / Subtype 1) (Mycoplasmoides pneumoniae).